We begin with the raw amino-acid sequence, 148 residues long: Transcription antitermination protein NusB (148 aa).

Belongs to the NusB family.

Its function is as follows. Involved in transcription antitermination. Required for transcription of ribosomal RNA (rRNA) genes. Binds specifically to the boxA antiterminator sequence of the ribosomal RNA (rrn) operons. This is Transcription antitermination protein NusB from Saccharopolyspora erythraea (strain ATCC 11635 / DSM 40517 / JCM 4748 / NBRC 13426 / NCIMB 8594 / NRRL 2338).